The following is a 297-amino-acid chain: Vacuolar protein sorting-associated protein 26C (297 aa).

Belongs to the VPS26 family. In terms of assembly, component of the commander complex that is essential for endosomal recycling of transmembrane cargos; the commander complex is composed of the CCC subcomplex and the retriever subcomplex. Component of the heterotrimeric retriever complex consisting of VPS26C, VPS29 and VPS35L; within the complex interacts with VPS35L. Interacts with SNX17 (via C-terminus); the interaction is direct and associates SNX17 with the retriever complex. Interacts with SNX31; the interaction is direct.

Its subcellular location is the endosome. Component of the commander complex that is essential for endosomal recycling of transmembrane cargos; the commander complex is composed of the CCC subcomplex and the retriever subcomplex. Component of the retriever complex, which is a heterotrimeric complex related to retromer cargo-selective complex (CSC) and essential for retromer-independent retrieval and recycling of numerous cargos such as integrin alpha-5/beta-1 (ITGA5:ITGB1). The recruitment of the retriever complex to the endosomal membrane involves CCC and WASH complexes. In the endosomes, drives the retriever and recycling of NxxY-motif-containing cargo proteins by coupling to SNX17, a cargo essential for the homeostatic maintenance of numerous cell surface proteins associated with processes that include cell migration, cell adhesion, nutrient supply and cell signaling. This chain is Vacuolar protein sorting-associated protein 26C (VPS26C), found in Pongo abelii (Sumatran orangutan).